The sequence spans 187 residues: Ribosome hibernation promotion factor (187 aa).

The protein belongs to the HPF/YfiA ribosome-associated protein family. Long HPF subfamily. Interacts with 100S ribosomes.

Its subcellular location is the cytoplasm. Its function is as follows. Involved in 100S ribosome formation from 70S ribosomes; 100S ribosomes are probably translationally inactive. Ribosome hibernation may be used by the cell to decrease overall energy consumption under nutrient-limiting conditions. Unlike E.coli, 100S ribosomes are present from mid-exponential growth, peak during the transition from log to stationary phase and then decrease. This is Ribosome hibernation promotion factor from Listeria monocytogenes serotype 1/2a (strain 10403S).